The primary structure comprises 201 residues: Holliday junction branch migration complex subunit RuvA (201 aa).

Residues 1-63 form a domain I region; the sequence is MIAFVSGTVA…EDSLTLYGFA (63 aa). Positions 64 to 139 are domain II; it reads DDDERQVFEL…RLGEPIGAPA (76 aa). The tract at residues 139–143 is flexible linker; it reads AVGAP. The segment at 144 to 201 is domain III; that stretch reads VSTGWRDQLHAALIGLGYATREADEAVSAVAPQAEAAGGTPQVGALLKAALQTLNRAR.

The protein belongs to the RuvA family. Homotetramer. Forms an RuvA(8)-RuvB(12)-Holliday junction (HJ) complex. HJ DNA is sandwiched between 2 RuvA tetramers; dsDNA enters through RuvA and exits via RuvB. An RuvB hexamer assembles on each DNA strand where it exits the tetramer. Each RuvB hexamer is contacted by two RuvA subunits (via domain III) on 2 adjacent RuvB subunits; this complex drives branch migration. In the full resolvosome a probable DNA-RuvA(4)-RuvB(12)-RuvC(2) complex forms which resolves the HJ.

It localises to the cytoplasm. In terms of biological role, the RuvA-RuvB-RuvC complex processes Holliday junction (HJ) DNA during genetic recombination and DNA repair, while the RuvA-RuvB complex plays an important role in the rescue of blocked DNA replication forks via replication fork reversal (RFR). RuvA specifically binds to HJ cruciform DNA, conferring on it an open structure. The RuvB hexamer acts as an ATP-dependent pump, pulling dsDNA into and through the RuvAB complex. HJ branch migration allows RuvC to scan DNA until it finds its consensus sequence, where it cleaves and resolves the cruciform DNA. This is Holliday junction branch migration complex subunit RuvA from Streptomyces coelicolor (strain ATCC BAA-471 / A3(2) / M145).